The sequence spans 322 residues: Ribosomal RNA small subunit methyltransferase H (322 aa).

S-adenosyl-L-methionine is bound by residues glycine 43–tyrosine 45, aspartate 60, phenylalanine 86, aspartate 104, and glutamine 111.

Belongs to the methyltransferase superfamily. RsmH family.

It is found in the cytoplasm. It carries out the reaction cytidine(1402) in 16S rRNA + S-adenosyl-L-methionine = N(4)-methylcytidine(1402) in 16S rRNA + S-adenosyl-L-homocysteine + H(+). Functionally, specifically methylates the N4 position of cytidine in position 1402 (C1402) of 16S rRNA. This chain is Ribosomal RNA small subunit methyltransferase H, found in Caulobacter sp. (strain K31).